The chain runs to 381 residues: Pectin lyase 1 (381 aa).

Positions 1 to 20 are cleaved as a signal peptide; it reads MKYASFIAAAAAALASAVSA. Disulfide bonds link cysteine 83/cysteine 102 and cysteine 92/cysteine 227. Asparagine 130 is a glycosylation site (N-linked (GlcNAc...) asparagine). Arginine 257 is an active-site residue. A disulfide bridge links cysteine 324 with cysteine 332.

Belongs to the polysaccharide lyase 1 family.

The protein resides in the secreted. It catalyses the reaction Eliminative cleavage of (1-&gt;4)-alpha-D-galacturonan methyl ester to give oligosaccharides with 4-deoxy-6-O-methyl-alpha-D-galact-4-enuronosyl groups at their non-reducing ends.. Pectinolytic enzymes consist of four classes of enzymes: pectin lyase, polygalacturonase, pectin methylesterase and rhamnogalacturonase. Among pectinolytic enzymes, pectin lyase is the most important in depolymerization of pectin, since it cleaves internal glycosidic bonds of highly methylated pectins. This Aspergillus oryzae (strain ATCC 42149 / RIB 40) (Yellow koji mold) protein is Pectin lyase 1 (pel1).